The chain runs to 128 residues: Small ribosomal subunit protein uS9 (128 aa).

Residues 105 to 128 (DPRSVERKKPGQPKARRRFQFSKR) are disordered. The span at 114–128 (PGQPKARRRFQFSKR) shows a compositional bias: basic residues.

This sequence belongs to the universal ribosomal protein uS9 family.

The polypeptide is Small ribosomal subunit protein uS9 (Bacteroides thetaiotaomicron (strain ATCC 29148 / DSM 2079 / JCM 5827 / CCUG 10774 / NCTC 10582 / VPI-5482 / E50)).